The chain runs to 86 residues: Centromere protein W (86 aa).

The protein belongs to the CENP-W/WIP1 family. Heterodimer with CENPT; this dimer coassembles with CENPS-CENPX heterodimers at centromeres to form the tetrameric CENP-T-W-S-X complex, which is a subcomplex of the large constitutive centromere-associated network (CCAN, also known as the interphase centromere complex or ICEN). Interacts with NPM1.

Its subcellular location is the nucleus. It is found in the chromosome. The protein resides in the centromere. The protein localises to the kinetochore. It localises to the nucleus matrix. Its subcellular location is the nucleolus. Functionally, component of the CENPA-NAC (nucleosome-associated) complex, a complex that plays a central role in assembly of kinetochore proteins, mitotic progression and chromosome segregation. The CENPA-NAC complex recruits the CENPA-CAD (nucleosome distal) complex and may be involved in incorporation of newly synthesized CENPA into centromeres. Part of a nucleosome-associated complex that binds specifically to histone H3-containing nucleosomes at the centromere, as opposed to nucleosomes containing CENPA. Component of the heterotetrameric CENP-T-W-S-X complex that binds and supercoils DNA, and plays an important role in kinetochore assembly. CENPW has a fundamental role in kinetochore assembly and function. It is one of the inner kinetochore proteins, with most further proteins binding downstream. Required for normal chromosome organization and normal progress through mitosis. The chain is Centromere protein W (Cenpw) from Rattus norvegicus (Rat).